The chain runs to 252 residues: 3-dehydroquinate dehydratase (252 aa).

3-dehydroquinate contacts are provided by residues S21, 46–48 (EWR), and R82. H143 serves as the catalytic Proton donor/acceptor. K170 serves as the catalytic Schiff-base intermediate with substrate. 3 residues coordinate 3-dehydroquinate: R213, S232, and Q236.

The protein belongs to the type-I 3-dehydroquinase family. In terms of assembly, homodimer.

The enzyme catalyses 3-dehydroquinate = 3-dehydroshikimate + H2O. It participates in metabolic intermediate biosynthesis; chorismate biosynthesis; chorismate from D-erythrose 4-phosphate and phosphoenolpyruvate: step 3/7. Its function is as follows. Involved in the third step of the chorismate pathway, which leads to the biosynthesis of aromatic amino acids. Catalyzes the cis-dehydration of 3-dehydroquinate (DHQ) and introduces the first double bond of the aromatic ring to yield 3-dehydroshikimate. The polypeptide is 3-dehydroquinate dehydratase (Escherichia coli O8 (strain IAI1)).